The following is a 1250-amino-acid chain: MGHSRRPAGGEKKSRGFGRSKAAADVGDGRQTGGKPQVKKATFESTKKKEIGVSDLTLLSKISNEAINDNLKLRFEHDEIYTYIGHVLVSVNPFQDLGIYTDNVLQSYRGKNRLEVPPHVFAVAESAYYNMKSYKDNQCVIISGESGAGKTEAAKRIMQYIASVSGGTDSSIQHTKEMVLATNPLLESFGNAKTLRNNNSSRFGKYLELEFNTNGEPVGANITNYLLEKSRVVGQITNERNFHIFYQFTKAAPQKYRDLFGIQQPQSYLYTSRSKCYDVPGVDDSAEFRDTLNAMNVIGMTEGEQDDVFRMLAAILWIGNVQFAEDDSGNAVITDQSVVDYVAYLLEVDAAQVNKAFTIRVMETARGGRRGSVYEVPLNTVQALAVRDALAKAIYFNLFDWIVQRVNASLTARGEVANSIGILDIYGFEIFEKNSFEQLCINYVNEKLQQIFIQLTLKAEQDEYAREQIQWTPIKYFDNKVVCSLIEDKRPPGVFAALNDACATAHADSSAADNTFVGRLNFLSQNPNFENRQGQFIVKHYAGDVSYAVAGMTDKNKDQLLKDLLNLVGTSGNQFVHTLFPEQVNQDDKRRPPTASDKIKASANDLVATLMKAQPSYIRTIKPNDNKAPKEYNVGNVLHQIKYLGLQENVRIRRAGFAYRQTFDKFVERFYLLSPKTSYAGDYTWTGDAESGARQILKDTSIPAEEYQMGITKVFVKTPETLFALEAMRDRYWHNMAIRIQRAWRNYLRYRTECAIRIQRFWRRTTGGLEFIKLRDQGHQLLNGRKERRRMSLLGSRRFLGDYIGVGNKGGPGEMVRNGAGISGSEDILFSCRGEVLVSKFGRSSKPAPRILVLTNRHVYIIAQNLVNNQLVISSERTIPIGAIKAVSASNLKDDWFSIVVGSPQEPDPLVNCVFKTEFFTHLNNTLHGQLNLKIADHIEYNKKPGKLATVKVVKDPAVARDDSYKSGTIHTGPGEPANSVSKPTPRPKQVSARPVTKGKLLRPGGPGGGPSKLAARPTPAAQPLPRATPQPAAPQPAARAVPQPVAAVAASHTRTGSTASVRAPPPPPPAAAPAPKKPTAKVLYDFNSQQSNELSIKAGEIVQIVSKEGNGWWLCMNMTTSAQGWTPEAYLEEQVAPTPKPAPPPPPPAAPRSTPAPATNGAAAAAKAKPAPPAPPAKRPNMAARKAVPTPPPAPRDSAVSMNSHDSSGGSGRGTPNSMSNASLAGGLAEALRARQHAMQGKQDDDDDW.

The disordered stretch occupies residues 1 to 43 (MGHSRRPAGGEKKSRGFGRSKAAADVGDGRQTGGKPQVKKATF). In terms of domain architecture, Myosin motor spans 51–730 (IGVSDLTLLS…TLFALEAMRD (680 aa)). An ATP-binding site is contributed by 144-151 (GESGAGKT). Ser372 is subject to Phosphoserine. The segment at 419 to 501 (SIGILDIYGF…PGVFAALNDA (83 aa)) is actin-binding. 2 consecutive IQ domains span residues 734-754 (HNMA…RTEC) and 755-780 (AIRI…QGHQ). Residues 788–978 (RRRMSLLGSR…TIHTGPGEPA (191 aa)) enclose the TH1 domain. 2 disordered regions span residues 962–1079 (DDSY…PKKP) and 1126–1250 (WTPE…DDDW). Residues 1021–1035 (AAQPLPRATPQPAAP) show a composition bias toward pro residues. The segment covering 1036–1051 (QPAARAVPQPVAAVAA) has biased composition (low complexity). 2 stretches are compositionally biased toward pro residues: residues 1064-1077 (APPP…PAPK) and 1139-1151 (TPKP…PPAA). The SH3 domain maps to 1076 to 1137 (PKKPTAKVLY…PEAYLEEQVA (62 aa)). The segment covering 1152 to 1170 (PRSTPAPATNGAAAAAKAK) has biased composition (low complexity). The span at 1201 to 1222 (VSMNSHDSSGGSGRGTPNSMSN) shows a compositional bias: polar residues. Residues 1223 to 1232 (ASLAGGLAEA) show a composition bias toward low complexity.

This sequence belongs to the TRAFAC class myosin-kinesin ATPase superfamily. Myosin family. Post-translationally, phosphorylation of the TEDS site (Ser-372) is required for the polarization of the actin cytoskeleton. Phosphorylation probably activates the myosin-I ATPase activity.

The protein localises to the cytoplasm. Its subcellular location is the cytoskeleton. It is found in the actin patch. Type-I myosin implicated in the organization of the actin cytoskeleton. Required for proper actin cytoskeleton polarization. At the cell cortex, assembles in patch-like structures together with proteins from the actin-polymerizing machinery and promotes actin assembly. Functions as actin nucleation-promoting factor (NPF) for the Arp2/3 complex. Plays an important role in polarized growth, spore germination, hyphal morphogenesis, and septal wall formation. In Neosartorya fischeri (strain ATCC 1020 / DSM 3700 / CBS 544.65 / FGSC A1164 / JCM 1740 / NRRL 181 / WB 181) (Aspergillus fischerianus), this protein is Myosin-1 (myoA).